A 171-amino-acid polypeptide reads, in one-letter code: Moubatin (171 aa).

The first 15 residues, 1-15 (MMLVLTTLIFSFSAS), serve as a signal peptide directing secretion. 3 disulfide bridges follow: C23–C144, C55–C166, and C118–C145.

The protein belongs to the calycin superfamily. Lipocalin family. The N-terminus is blocked. As to expression, expressed in salivary glands.

It is found in the secreted. Tick salivary platelet aggregation inhibitor that plays an important part in the anti-hemostatic strategy of ticks. Acts by scavenging thromboxane A2 (TXA2), a potent inducer of platelet aggregation and blood vessel constriction. As a consequence, is a specific inhibitor of collagen-induced platelet aggregation. In addition, it also acts as a potent inhibitor of TXA2-mediated vasoconstriction. Has also been found to bind leukotriene B4 (LTB4) (which also derives from arachidonic acid, as TXA2) with affinities in the nanomolar range. It does not interact with complement protein C5. The sequence is that of Moubatin from Ornithodoros moubata (Soft tick).